A 359-amino-acid polypeptide reads, in one-letter code: ELAV-like protein 2 (359 aa).

Residues 1–39 (METQLSNGPTCNNTANGPTTVNNNCSSPVDSGNTEDSKT) form a disordered region. RRM domains lie at 39–117 (TNLI…YARP) and 125–205 (ANLY…FANN). Ser221 bears the Phosphoserine mark. The RRM 3 domain occupies 276-354 (WCIFVYNLAP…RVLQVSFKTN (79 aa)).

The protein belongs to the RRM elav family. In terms of assembly, interacts with IGF2BP1. Interacts with MAP1B light chain LC1.

Functionally, RNA-binding protein that binds to the 3' untranslated region (3'UTR) of target mRNAs. Seems to recognize a GAAA motif. Can bind to its own 3'UTR, the FOS 3'UTR and the ID 3'UTR. In Rattus norvegicus (Rat), this protein is ELAV-like protein 2 (Elavl2).